A 690-amino-acid polypeptide reads, in one-letter code: Eukaryotic translation initiation factor 3 subunit B (690 aa).

Residues 1–11 show a composition bias toward basic and acidic residues; the sequence is MAKKKSEEHSG. The segment at 1–36 is disordered; sequence MAKKKSEEHSGADANDSDYQEEPNFEDPPGFVDNIS. Over residues 15-25 the composition is skewed to acidic residues; sequence NDSDYQEEPNF. The RRM domain maps to 57-141; it reads SVVVVDNIPK…HTFAVNLFTD (85 aa). 5 WD repeats span residues 207–246, 293–331, 334–369, 442–484, and 530–575; these read TRER…KIQK, DGMS…LLDL, IKIP…TLME, EIRE…KPSL, and PDHF…IKRT. The stretch at 595-645 forms a coiled coil; it reads EEKQKEIKKNLKKYYAAFEQKDRLRLTRASKELLEKRSQLRETFMEYRNKR.

The protein belongs to the eIF-3 subunit B family. Component of the eukaryotic translation initiation factor 3 (eIF-3) complex. The eIF-3 complex interacts with pix. Interacts with mxt.

The protein localises to the cytoplasm. RNA-binding component of the eukaryotic translation initiation factor 3 (eIF-3) complex, which is involved in protein synthesis of a specialized repertoire of mRNAs and, together with other initiation factors, stimulates binding of mRNA and methionyl-tRNAi to the 40S ribosome. The eIF-3 complex specifically targets and initiates translation of a subset of mRNAs involved in cell proliferation. This chain is Eukaryotic translation initiation factor 3 subunit B, found in Drosophila erecta (Fruit fly).